A 238-amino-acid polypeptide reads, in one-letter code: Large ribosomal subunit protein uL1 (238 aa).

The protein belongs to the universal ribosomal protein uL1 family. Part of the 50S ribosomal subunit.

In terms of biological role, binds directly to 23S rRNA. The L1 stalk is quite mobile in the ribosome, and is involved in E site tRNA release. Its function is as follows. Protein L1 is also a translational repressor protein, it controls the translation of the L11 operon by binding to its mRNA. The polypeptide is Large ribosomal subunit protein uL1 (Salinispora arenicola (strain CNS-205)).